The following is a 140-amino-acid chain: Large ribosomal subunit protein uL16c (140 aa).

Belongs to the universal ribosomal protein uL16 family. As to quaternary structure, part of the 50S ribosomal subunit.

It is found in the plastid. The protein resides in the chloroplast. This chain is Large ribosomal subunit protein uL16c, found in Psilotum nudum (Whisk fern).